The primary structure comprises 242 residues: Small ribosomal subunit protein uS2 (242 aa).

This sequence belongs to the universal ribosomal protein uS2 family.

In Shewanella loihica (strain ATCC BAA-1088 / PV-4), this protein is Small ribosomal subunit protein uS2.